A 506-amino-acid polypeptide reads, in one-letter code: Glutamate--tRNA ligase (506 aa).

The 'HIGH' region motif lies at 24–34 (PSPTGTPHVGL). The disordered stretch occupies residues 124–147 (TPEEVEQRHRAKGEDPKRGYDNYD). The segment covering 128–147 (VEQRHRAKGEDPKRGYDNYD) has biased composition (basic and acidic residues). Residues 268–272 (KLSKR) carry the 'KMSKS' region motif. Lysine 271 is an ATP binding site.

Belongs to the class-I aminoacyl-tRNA synthetase family. Glutamate--tRNA ligase type 1 subfamily. Monomer.

The protein localises to the cytoplasm. It carries out the reaction tRNA(Glu) + L-glutamate + ATP = L-glutamyl-tRNA(Glu) + AMP + diphosphate. Catalyzes the attachment of glutamate to tRNA(Glu) in a two-step reaction: glutamate is first activated by ATP to form Glu-AMP and then transferred to the acceptor end of tRNA(Glu). This Kocuria rhizophila (strain ATCC 9341 / DSM 348 / NBRC 103217 / DC2201) protein is Glutamate--tRNA ligase.